Reading from the N-terminus, the 291-residue chain is 4-hydroxy-tetrahydrodipicolinate synthase (291 aa).

Threonine 45 contributes to the pyruvate binding site. Tyrosine 133 serves as the catalytic Proton donor/acceptor. Lysine 161 functions as the Schiff-base intermediate with substrate in the catalytic mechanism. Isoleucine 203 serves as a coordination point for pyruvate.

This sequence belongs to the DapA family. Homotetramer; dimer of dimers.

Its subcellular location is the cytoplasm. It catalyses the reaction L-aspartate 4-semialdehyde + pyruvate = (2S,4S)-4-hydroxy-2,3,4,5-tetrahydrodipicolinate + H2O + H(+). It functions in the pathway amino-acid biosynthesis; L-lysine biosynthesis via DAP pathway; (S)-tetrahydrodipicolinate from L-aspartate: step 3/4. In terms of biological role, catalyzes the condensation of (S)-aspartate-beta-semialdehyde [(S)-ASA] and pyruvate to 4-hydroxy-tetrahydrodipicolinate (HTPA). The sequence is that of 4-hydroxy-tetrahydrodipicolinate synthase from Neisseria meningitidis serogroup C (strain 053442).